Here is a 124-residue protein sequence, read N- to C-terminus: Protein MT1307 (124 aa).

Positions 1-35 form a signal peptide, tat-type signal; it reads MTTMITLRRRFAVAVAGVATAAATTVTLAPAPANA.

To M.tuberculosis Rv1813c. In terms of processing, predicted to be exported by the Tat system. The position of the signal peptide cleavage has not been experimentally proven.

The chain is Protein MT1307 from Mycobacterium tuberculosis (strain CDC 1551 / Oshkosh).